The primary structure comprises 96 residues: Nucleoid-associated protein CT_335 (96 aa).

It belongs to the YbaB/EbfC family. Homodimer.

Its subcellular location is the cytoplasm. It is found in the nucleoid. In terms of biological role, binds to DNA and alters its conformation. May be involved in regulation of gene expression, nucleoid organization and DNA protection. This chain is Nucleoid-associated protein CT_335, found in Chlamydia trachomatis serovar D (strain ATCC VR-885 / DSM 19411 / UW-3/Cx).